The following is a 428-amino-acid chain: Nucleoside diphosphate phosphatase ENTPD5 (428 aa).

A signal peptide spans 1-24 (MATSWGTVFFMLVVSCVCSAVSHR). Glutamate 172 acts as the Proton acceptor in catalysis. The N-linked (GlcNAc...) asparagine glycan is linked to asparagine 232. 2 cysteine pairs are disulfide-bonded: cysteine 272/cysteine 303 and cysteine 363/cysteine 377. The N-linked (GlcNAc...) asparagine glycan is linked to asparagine 368.

The protein belongs to the GDA1/CD39 NTPase family. In terms of assembly, monomer; active form. Homodimer; disulfide-linked. Homodimers are enzymatically inactive. It depends on Ca(2+) as a cofactor. Mg(2+) is required as a cofactor. Post-translationally, N-glycosylated; high-mannose type. Glycosylation is not essential for enzymatic activity. In terms of tissue distribution, expressed in adult liver, kidney, prostate, testis and colon. Much weaker expression in other tissues.

The protein resides in the endoplasmic reticulum. It localises to the secreted. The catalysed reaction is a ribonucleoside 5'-diphosphate + H2O = a ribonucleoside 5'-phosphate + phosphate + H(+). It catalyses the reaction GDP + H2O = GMP + phosphate + H(+). The enzyme catalyses UDP + H2O = UMP + phosphate + H(+). It carries out the reaction IDP + H2O = IMP + phosphate + H(+). The catalysed reaction is CDP + H2O = CMP + phosphate + H(+). It catalyses the reaction ADP + H2O = AMP + phosphate + H(+). It participates in protein modification; protein glycosylation. Functionally, hydrolyzes nucleoside diphosphates with a preference for GDP, IDP and UDP compared to ADP and CDP. In the lumen of the endoplasmic reticulum, hydrolyzes UDP that acts as an end-product feedback inhibitor of the UDP-Glc:glycoprotein glucosyltransferases. UMP can be transported back by an UDP-sugar antiporter to the cytosol where it is consumed to regenerate UDP-glucose. Therefore, it positively regulates protein reglucosylation by clearing UDP from the ER lumen and by promoting the regeneration of UDP-glucose. Protein reglucosylation is essential to proper glycoprotein folding and quality control in the ER. The sequence is that of Nucleoside diphosphate phosphatase ENTPD5 from Homo sapiens (Human).